Consider the following 530-residue polypeptide: UPF0422 protein lpg2959 (530 aa).

A signal peptide spans Met1–Ala19. Residues Asp20–Ala66 are a coiled coil. The segment at Leu50–Ala81 is disordered. A compositionally biased stretch (low complexity) spans Gln63–Pro75.

This sequence belongs to the UPF0422 family.

The chain is UPF0422 protein lpg2959 from Legionella pneumophila subsp. pneumophila (strain Philadelphia 1 / ATCC 33152 / DSM 7513).